Here is a 380-residue protein sequence, read N- to C-terminus: Cell division protein ZipA (380 aa).

Residues 1–7 (MEDNFRN) lie on the Periplasmic side of the membrane. Residues 8-28 (VLIILSAIVITAIFIHGLWTL) form a helical membrane-spanning segment. The Cytoplasmic segment spans residues 29–380 (RKQKNPYKLK…DRKSRIALVE (352 aa)).

It belongs to the ZipA family. Interacts with FtsZ via their C-terminal domains.

Its subcellular location is the cell inner membrane. Essential cell division protein that stabilizes the FtsZ protofilaments by cross-linking them and that serves as a cytoplasmic membrane anchor for the Z ring. Also required for the recruitment to the septal ring of downstream cell division proteins. This is Cell division protein ZipA from Colwellia psychrerythraea (strain 34H / ATCC BAA-681) (Vibrio psychroerythus).